We begin with the raw amino-acid sequence, 345 residues long: Lysine-specific demethylase JMJ32 (345 aa).

Residues 122–315 (GYLQQQNDCF…IKYAYFNFLQ (194 aa)) enclose the JmjC domain. His-174, Asp-176, and His-281 together coordinate Fe cation.

Belongs to the JARID1 histone demethylase family. The cofactor is Fe(2+). In terms of tissue distribution, expressed ubiquitously including in vasculatures, leaves, siliques, roots and inflorescences. Present in the root meristem. Accumulates in cotyledons and root tips of young seedlings.

It localises to the nucleus. Its subcellular location is the cytoplasm. The protein localises to the endoplasmic reticulum. The catalysed reaction is N(6),N(6),N(6)-trimethyl-L-lysyl(27)-[histone H3] + 2-oxoglutarate + O2 = N(6),N(6)-dimethyl-L-lysyl(27)-[histone H3] + formaldehyde + succinate + CO2. It carries out the reaction N(6),N(6)-dimethyl-L-lysyl(27)-[histone H3] + 2-oxoglutarate + O2 = N(6)-methyl-L-lysyl(27)-[histone H3] + formaldehyde + succinate + CO2. It catalyses the reaction N(6),N(6),N(6)-trimethyl-L-lysyl(27)-[histone H3] + 2 2-oxoglutarate + 2 O2 = N(6)-methyl-L-lysyl(27)-[histone H3] + 2 formaldehyde + 2 succinate + 2 CO2. Histone demethylase that demethylates 'Lys-27' (H3K27me) of histone H3 with a specific activity for H3K27me3 and H3K27me2, and involved in the regulation of gene expression. No activity on H3K27me1. Together with JMJ30, regulates the flowering-repressor FLOWERING LOCUS C (FLC) locus by removing the repressive histone modification H3 lysine 27 trimethylation (H3K27me3), especially at elevated temperatures (e.g. 29 degrees Celsius), thus preventing extreme precocious flowering. JMJ30 and JMJ32 are regulators involved in the integration of abscisic acid (ABA) and brassinosteroids (BR) signaling pathways. Together with JMJ30, controls ABA-mediated growth arrest during the post-germination stage in unfavorable conditions, and responses to ABA during root development, via the removal of repressive histone mark (H3K27me3) from the SnRK2.8 promoter, thus promoting SnRK2.8 expression and subsequent kinase-dependent ABI3 activation. In addition, removes the repressive histone marks (H3K27me3) from the BZR1 locus in response to stress and ABA, thus activating the BR signaling pathway which, in turn, inhibits the ABA signaling pathway. This Arabidopsis thaliana (Mouse-ear cress) protein is Lysine-specific demethylase JMJ32.